The following is a 409-amino-acid chain: Transforming growth factor beta regulator 1 (409 aa).

The segment covering 1 to 13 (MNHSPATTFSPHS) has biased composition (polar residues). Disordered regions lie at residues 1–31 (MNHS…KSHK) and 127–162 (GGSC…TEGT). The span at 21 to 31 (RNKKSTKKSHK) shows a compositional bias: basic residues. Over residues 136–150 (DKREKGKENKSEAMK) the composition is skewed to basic and acidic residues. The FYR N-terminal domain maps to 179-238 (VFPIVLEGLTVYSLGEIISDRAGFHEKVAIYPVGFCSTRVYVGMKNPDQKCLYTCQIKDG). One can recognise an FYR C-terminal domain in the interval 239–318 (GTGPQFEIVP…RKCTGYQWVK (80 aa)).

The protein belongs to the TBRG1 family.

The protein resides in the nucleus. In terms of biological role, may act as a growth inhibitor. May be involved in maintaining chromosomal stability. This is Transforming growth factor beta regulator 1 (tbrg1) from Xenopus tropicalis (Western clawed frog).